Reading from the N-terminus, the 97-residue chain is Acylphosphatase (97 aa).

Residues 9–97 (RKHIVVTGLV…ETARAFGVRQ (89 aa)) enclose the Acylphosphatase-like domain. Catalysis depends on residues R24 and N42.

This sequence belongs to the acylphosphatase family.

The catalysed reaction is an acyl phosphate + H2O = a carboxylate + phosphate + H(+). The protein is Acylphosphatase (acyP) of Bifidobacterium longum (strain NCC 2705).